A 1341-amino-acid chain; its full sequence is uncharacterized protein (1341 aa).

The segment at residues 41 to 68 is a DNA-binding region (zn(2)-C6 fungal-type); sequence CLLCRRRKQRCDHKLPSCTACLKAGIKC. Composition is skewed to low complexity over residues 72–93, 779–791, 864–906, 920–967, and 1036–1050; these read SKYS…AGTV, SNSA…SNSN, SNSS…NDNN, NHNN…GNNS, and SPSK…SSHS. 4 disordered regions span residues 72–100, 770–804, 864–971, and 1031–1116; these read SKYS…PHPV, ISSG…MPPA, SNSS…QYVR, and TMTN…NSNP. Positions 1057–1076 are enriched in polar residues; the sequence is MTQSPTPYPQTSNMLPQQHV. Over residues 1078 to 1090 the composition is skewed to low complexity; the sequence is RPLPQQQREQPQQ. Over residues 1091 to 1116 the composition is skewed to polar residues; it reads HITSPQRFSESNFTNQLNNGMINSNP. Phosphoserine is present on Ser-1143. Over residues 1220–1230 the composition is skewed to polar residues; sequence SQEPSSLSMDK. Residues 1220–1240 form a disordered region; that stretch reads SQEPSSLSMDKQQQQHQQQNM.

Its subcellular location is the nucleus. This is an uncharacterized protein from Saccharomyces cerevisiae (strain ATCC 204508 / S288c) (Baker's yeast).